The primary structure comprises 469 residues: ABHD16B (469 aa).

Residues 174 to 298 (VICCEGNAGF…GLVVRTVREH (125 aa)) form the AB hydrolase-1 domain. Residues Ser247, Asp322, and His418 each act as charge relay system in the active site.

Belongs to the AB hydrolase superfamily. ABHD16 family.

The catalysed reaction is a 1,2-diacyl-sn-glycero-3-phospho-L-serine + H2O = a 2-acyl-sn-glycero-3-phospho-L-serine + a fatty acid + H(+). It catalyses the reaction a 1-acylglycerol + H2O = glycerol + a fatty acid + H(+). The enzyme catalyses 1-(9Z-octadecenoyl)-glycerol + H2O = glycerol + (9Z)-octadecenoate + H(+). In terms of biological role, hydrolyzes the sn-1 position of glycerophospholipids with high specificity towards phosphatidylserine (PS), PS-PLA1 enzyme. Also hydrolyzes the acyl chain of glycerolipids with a preference for the monoacylglycerol (MAG) 1-acylglycerol, MAG lipase. Plays a regulatory role in cellular lipid homeostasis by modulating genes involved in neutral lipid degradation and in phospholipid synthesis and composition. The sequence is that of ABHD16B from Homo sapiens (Human).